The sequence spans 26 residues: Acetyl-CoA acetyltransferase (26 aa).

Residue cysteine 21 is the Acyl-thioester intermediate of the active site.

It belongs to the thiolase-like superfamily. Thiolase family. As to quaternary structure, homotetramer. Succinylation, adjacent to a coenzyme A binding site. Desuccinylated by SIRT5.

Its subcellular location is the mitochondrion. The enzyme catalyses 2 acetyl-CoA = acetoacetyl-CoA + CoA. This chain is Acetyl-CoA acetyltransferase, found in Sus scrofa (Pig).